The chain runs to 348 residues: Erythronate-4-phosphate dehydrogenase (348 aa).

Substrate is bound by residues T46 and T67. D147 serves as a coordination point for NAD(+). The active site involves R209. Position 233 (D233) interacts with NAD(+). E238 is a catalytic residue. H255 acts as the Proton donor in catalysis. G258 contributes to the NAD(+) binding site. Position 259 (Y259) interacts with substrate.

The protein belongs to the D-isomer specific 2-hydroxyacid dehydrogenase family. PdxB subfamily. Homodimer.

Its subcellular location is the cytoplasm. The enzyme catalyses 4-phospho-D-erythronate + NAD(+) = (R)-3-hydroxy-2-oxo-4-phosphooxybutanoate + NADH + H(+). It participates in cofactor biosynthesis; pyridoxine 5'-phosphate biosynthesis; pyridoxine 5'-phosphate from D-erythrose 4-phosphate: step 2/5. In terms of biological role, catalyzes the oxidation of erythronate-4-phosphate to 3-hydroxy-2-oxo-4-phosphonooxybutanoate. This is Erythronate-4-phosphate dehydrogenase from Bacteroides fragilis (strain ATCC 25285 / DSM 2151 / CCUG 4856 / JCM 11019 / LMG 10263 / NCTC 9343 / Onslow / VPI 2553 / EN-2).